We begin with the raw amino-acid sequence, 122 residues long: Large ribosomal subunit protein uL14 (122 aa).

Belongs to the universal ribosomal protein uL14 family. Part of the 50S ribosomal subunit. Forms a cluster with proteins L3 and L19. In the 70S ribosome, L14 and L19 interact and together make contacts with the 16S rRNA in bridges B5 and B8.

Binds to 23S rRNA. Forms part of two intersubunit bridges in the 70S ribosome. The polypeptide is Large ribosomal subunit protein uL14 (Thermotoga maritima (strain ATCC 43589 / DSM 3109 / JCM 10099 / NBRC 100826 / MSB8)).